The chain runs to 118 residues: Small ribosomal subunit protein uS13 (118 aa).

The interval 93-118 (KKLPVRGQRTKTNARTRKGPRKLMKK) is disordered.

The protein belongs to the universal ribosomal protein uS13 family. As to quaternary structure, part of the 30S ribosomal subunit. Forms a loose heterodimer with protein S19. Forms two bridges to the 50S subunit in the 70S ribosome.

Functionally, located at the top of the head of the 30S subunit, it contacts several helices of the 16S rRNA. In the 70S ribosome it contacts the 23S rRNA (bridge B1a) and protein L5 of the 50S subunit (bridge B1b), connecting the 2 subunits; these bridges are implicated in subunit movement. Contacts the tRNAs in the A and P-sites. This chain is Small ribosomal subunit protein uS13, found in Buchnera aphidicola subsp. Baizongia pistaciae (strain Bp).